Consider the following 99-residue polypeptide: Integration host factor subunit beta (99 aa).

Belongs to the bacterial histone-like protein family. In terms of assembly, heterodimer of an alpha and a beta chain.

In terms of biological role, this protein is one of the two subunits of integration host factor, a specific DNA-binding protein that functions in genetic recombination as well as in transcriptional and translational control. The sequence is that of Integration host factor subunit beta from Laribacter hongkongensis (strain HLHK9).